Here is a 47-residue protein sequence, read N- to C-terminus: Large ribosomal subunit protein bL34 (47 aa).

It belongs to the bacterial ribosomal protein bL34 family.

In Mycobacterium sp. (strain JLS), this protein is Large ribosomal subunit protein bL34.